Here is a 1167-residue protein sequence, read N- to C-terminus: Phenyloxazoline synthase MbtB (1167 aa).

In terms of domain architecture, Carrier 1 spans E2–T78. O-(pantetheine 4'-phosphoryl)serine is present on S39. Residues T78 to A100 form a disordered region. The interval P98–T390 is condensation/cyclization. An adenylation region spans residues T575 to A967. In terms of domain architecture, Carrier 2 spans V1054 to E1130. Position 1089 is an O-(pantetheine 4'-phosphoryl)serine (S1089).

This sequence belongs to the ATP-dependent AMP-binding enzyme family. MbtB subfamily. Pantetheine 4'-phosphate serves as cofactor. Post-translationally, 4'-phosphopantetheine is transferred from CoA to a specific serine in each of the two carrier protein domains, leading to their activation from apo to holo forms.

It functions in the pathway siderophore biosynthesis; mycobactin biosynthesis. Functionally, involved in the initial steps of the mycobactin biosynthetic pathway. Putatively couples activated salicylic acid with serine or threonine and cyclizes this precursor to the hydroxyphenyloxazoline ring system present in this class of siderophores. The sequence is that of Phenyloxazoline synthase MbtB (mbtB) from Mycobacterium sp. (strain MCS).